Consider the following 494-residue polypeptide: Neuronal acetylcholine receptor subunit alpha-6 (494 aa).

The first 25 residues, 1–25 (MLTSKGQGFLHGGLCLWLCVFTPFF), serve as a signal peptide directing secretion. Residues 26-239 (KGCVGCATEE…ITYSFYIRRL (214 aa)) lie on the Extracellular side of the membrane. Asn54 and Asn171 each carry an N-linked (GlcNAc...) asparagine glycan. Cystine bridges form between Cys158-Cys172 and Cys222-Cys223. 3 helical membrane-spanning segments follow: residues 240–264 (PMFY…VFYL), 272–290 (VTLC…LVIT), and 306–327 (YLLF…VLNI). Residues 328–465 (HYRTPTTHTM…WKYVAMVVDR (138 aa)) are Cytoplasmic-facing. The residue at position 401 (Ser401) is a Phosphoserine. Residues 466 to 484 (VFLWVFIIVCVFGTAGLFL) form a helical membrane-spanning segment.

This sequence belongs to the ligand-gated ion channel (TC 1.A.9) family. Acetylcholine receptor (TC 1.A.9.1) subfamily. Alpha-6/CHRNA6 sub-subfamily. Neuronal AChR is composed of two different types of subunits: alpha and non-alpha (beta). CHRNA6/alpha-6 subunit can be combined to CHRNB2/beta-2, CHRNA4/alpha-4 and CHRNB3/beta-3 to give rise to functional receptors. Heteropentamers containing CHRNB3 have an stoichiometry of (CHRNA6:CHRNB2)2:CHRNB3. Interacts with LYPD6.

It is found in the synaptic cell membrane. It catalyses the reaction Ca(2+)(in) = Ca(2+)(out). The enzyme catalyses K(+)(in) = K(+)(out). The catalysed reaction is Na(+)(in) = Na(+)(out). Activated by a myriad of ligands such as acetylcholine, cytisine and nicotine. CHRNA6 nAChR activity is inhibited by the antagonists alpha-conotoxin MII and PIA, a small disulfide-constrained peptides from cone snails. Functionally, component of neuronal acetylcholine receptors (nAChRs) that function as pentameric, ligand-gated cation channels with high calcium permeability among other activities. nAChRs are excitatory neurotrasnmitter receptors formed by a collection of nAChR subunits known to mediate synaptic transmission in the nervous system and the neuromuscular junction. Each nAchR subunit confers differential attributes to channel properties, including activation, deactivation and desensitization kinetics, pH sensitivity, cation permeability, and binding to allosteric modulators. CHRNA6 forms pentameric channels with CHRNB2, CHRNB3 and CHRNA4 that exhibit high sensitivity to ACh and nicotine and are predominantly expressed in only a few brain areas, including dopaminergic neurons, norepirephrine neurons and cells of the visual system. nAChrs containing CHRNA6 subunits mediate endogenous cholinergic modulation of dopamine and gamma-aminobutyric acid (GABA) release in response to nicotine at nerve terminals. This is Neuronal acetylcholine receptor subunit alpha-6 (CHRNA6) from Pan troglodytes (Chimpanzee).